The chain runs to 114 residues: T-cell leukemia/lymphoma protein 1A (114 aa).

It belongs to the TCL1 family. In terms of assembly, homodimer. Interacts with AKT1, AKT2 and AKT3 (via PH domain). Interacts with PNPT1; the interaction has no effect on PNPT1 exonuclease activity. In terms of tissue distribution, restricted in the T-cell lineage to immature thymocytes and activated peripheral lymphocytes. Preferentially expressed early in T- and B-lymphocyte differentiation.

It is found in the cytoplasm. Its subcellular location is the nucleus. The protein resides in the microsome. It localises to the endoplasmic reticulum. In terms of biological role, enhances the phosphorylation and activation of AKT1, AKT2 and AKT3. Promotes nuclear translocation of AKT1. Enhances cell proliferation, stabilizes mitochondrial membrane potential and promotes cell survival. This is T-cell leukemia/lymphoma protein 1A (TCL1A) from Homo sapiens (Human).